We begin with the raw amino-acid sequence, 229 residues long: UPF0128 protein aq_756 (229 aa).

Belongs to the UPF0128 family.

The chain is UPF0128 protein aq_756 from Aquifex aeolicus (strain VF5).